The following is a 283-amino-acid chain: 4-diphosphocytidyl-2-C-methyl-D-erythritol kinase (283 aa).

Lys10 is an active-site residue. 99-109 provides a ligand contact to ATP; it reads PMGGGLGGGSS. Asp141 is an active-site residue.

Belongs to the GHMP kinase family. IspE subfamily. As to quaternary structure, homodimer.

It carries out the reaction 4-CDP-2-C-methyl-D-erythritol + ATP = 4-CDP-2-C-methyl-D-erythritol 2-phosphate + ADP + H(+). The protein operates within isoprenoid biosynthesis; isopentenyl diphosphate biosynthesis via DXP pathway; isopentenyl diphosphate from 1-deoxy-D-xylulose 5-phosphate: step 3/6. Functionally, catalyzes the phosphorylation of the position 2 hydroxy group of 4-diphosphocytidyl-2C-methyl-D-erythritol. The chain is 4-diphosphocytidyl-2-C-methyl-D-erythritol kinase from Citrobacter koseri (strain ATCC BAA-895 / CDC 4225-83 / SGSC4696).